We begin with the raw amino-acid sequence, 177 residues long: Large ribosomal subunit protein uL6 (177 aa).

It belongs to the universal ribosomal protein uL6 family. Part of the 50S ribosomal subunit.

This protein binds to the 23S rRNA, and is important in its secondary structure. It is located near the subunit interface in the base of the L7/L12 stalk, and near the tRNA binding site of the peptidyltransferase center. This chain is Large ribosomal subunit protein uL6, found in Rickettsia prowazekii (strain Madrid E).